Reading from the N-terminus, the 508-residue chain is Photosystem II CP47 reaction center protein (508 aa).

Transmembrane regions (helical) follow at residues 21-36, 101-115, 140-156, 203-218, 237-252, and 457-472; these read AVHI…WAGS, IVFS…IWHW, GIHL…FGAF, IAAG…FHLS, VLSS…AFIV, and TFAL…HGAR.

The protein belongs to the PsbB/PsbC family. PsbB subfamily. As to quaternary structure, PSII is composed of 1 copy each of membrane proteins PsbA, PsbB, PsbC, PsbD, PsbE, PsbF, PsbH, PsbI, PsbJ, PsbK, PsbL, PsbM, PsbT, PsbX, PsbY, PsbZ, Psb30/Ycf12, at least 3 peripheral proteins of the oxygen-evolving complex and a large number of cofactors. It forms dimeric complexes. The cofactor is Binds multiple chlorophylls. PSII binds additional chlorophylls, carotenoids and specific lipids..

The protein resides in the plastid. Its subcellular location is the chloroplast thylakoid membrane. Its function is as follows. One of the components of the core complex of photosystem II (PSII). It binds chlorophyll and helps catalyze the primary light-induced photochemical processes of PSII. PSII is a light-driven water:plastoquinone oxidoreductase, using light energy to abstract electrons from H(2)O, generating O(2) and a proton gradient subsequently used for ATP formation. This Cryptomeria japonica (Japanese cedar) protein is Photosystem II CP47 reaction center protein.